The sequence spans 76 residues: Acyl carrier protein (76 aa).

Positions methionine 1 to glutamine 76 constitute a Carrier domain. Serine 36 carries the post-translational modification O-(pantetheine 4'-phosphoryl)serine.

Belongs to the acyl carrier protein (ACP) family. In terms of processing, 4'-phosphopantetheine is transferred from CoA to a specific serine of apo-ACP by AcpS. This modification is essential for activity because fatty acids are bound in thioester linkage to the sulfhydryl of the prosthetic group.

The protein resides in the cytoplasm. It functions in the pathway lipid metabolism; fatty acid biosynthesis. Functionally, carrier of the growing fatty acid chain in fatty acid biosynthesis. The chain is Acyl carrier protein from Natranaerobius thermophilus (strain ATCC BAA-1301 / DSM 18059 / JW/NM-WN-LF).